The primary structure comprises 134 residues: MKSVFTLSASLAISLLLCCTAQANDHKILGVIAMPRNETNDLALKLPVCRIVKRIQLTADHGDLQLSGASVYFKAARSASQSLNIPSEIKEGQTTDWININSDNDNKRCVSKITFSGHTVNSSDMATLKIIGDD.

Residues 1-23 (MKSVFTLSASLAISLLLCCTAQA) form the signal peptide.

It belongs to the UPF0412 family.

This Escherichia coli (strain SMS-3-5 / SECEC) protein is UPF0412 protein YaaI.